The sequence spans 544 residues: Ell-associated factor Eaf (544 aa).

The disordered stretch occupies residues 147–544; sequence QSVPMNMGHQ…LSSNSSDDDD (398 aa). Basic and acidic residues predominate over residues 193–202; sequence SSKDKVDFKP. Position 205 is a phosphoserine (S205). A compositionally biased stretch (low complexity) spans 264-273; sequence SGSSTGSSSG. The segment covering 287–299 has biased composition (basic residues); sequence GKQRQAHGKRQQI. Composition is skewed to low complexity over residues 305–319, 333–374, and 396–407; these read PPVQQQPHYQQQQQP, QPHP…QQRP, and ASQSVAQAAAVL. Positions 425–440 are enriched in acidic residues; that stretch reads DSSDSDSGSDSDDSTE. Composition is skewed to low complexity over residues 450–483, 503–513, and 526–544; these read EQQQQQQLQHQQIQQPAPHHQRHQQQQSQQHMNQ, QQPQPQPQQQQ, and NDLLQNDLQLSSNSSDDDD.

The protein belongs to the EAF family.

It localises to the nucleus. Functionally, promotes transcriptional elongation by Su(Tpl)/ELL. Essential for development. This chain is Ell-associated factor Eaf, found in Drosophila persimilis (Fruit fly).